Here is a 214-residue protein sequence, read N- to C-terminus: Large ribosomal subunit protein uL16-like (214 aa).

The protein belongs to the universal ribosomal protein uL16 family. As to quaternary structure, component of the 60S large ribosomal subunit (LSU).

It localises to the cytoplasm. Testis-specific component of the ribosome, which is required for the transition from prophase to metaphase in male meiosis I. Compensates for the inactivated X-linked RPL10 paralog during spermatogenesis. The ribosome is a large ribonucleoprotein complex responsible for the synthesis of proteins in the cell. The small ribosomal subunit (SSU) binds messenger RNAs (mRNAs) and translates the encoded message by selecting cognate aminoacyl-transfer RNA (tRNA) molecules. The large subunit (LSU) contains the ribosomal catalytic site termed the peptidyl transferase center (PTC), which catalyzes the formation of peptide bonds, thereby polymerizing the amino acids delivered by tRNAs into a polypeptide chain. The nascent polypeptides leave the ribosome through a tunnel in the LSU and interact with protein factors that function in enzymatic processing, targeting, and the membrane insertion of nascent chains at the exit of the ribosomal tunnel. This is Large ribosomal subunit protein uL16-like (RPL10L) from Macaca fascicularis (Crab-eating macaque).